The sequence spans 174 residues: Glutaredoxin-C5, chloroplastic (174 aa).

The transit peptide at 1-51 directs the protein to the chloroplast; the sequence is MAVTAFNTLKLVSSSLDPIPSVSCSSYSFSLIYVGSPYKRCLKQSCSVRAM. The residue at position 52 (Thr52) is an N-acetylthreonine. Cys90 is subject to S-glutathionyl cysteine; partial. Cys90 and Cys93 are joined by a disulfide. The Glutaredoxin domain occupies 93 to 171; that stretch reads CTEVKTLFKR…LMLAEANGKN (79 aa). 3 residues coordinate glutathione: Val135, Cys148, and Thr149. Residue Cys148 is modified to S-glutathionyl cysteine; partial.

It belongs to the glutaredoxin family. CPYC subfamily. Monomeric apoprotein and homodimeric holoprotein containing a [2Fe-2S] cluster. No in vitro interactions with SUFE1, BOLA1, BOLA2 or BOLA4. Post-translationally, glutathionylated.

The protein localises to the plastid. Its subcellular location is the chloroplast. Has a glutathione-disulfide oxidoreductase activity in the presence of NADPH and glutathione reductase. Reduces low molecular weight disulfides and proteins. Can assemble a [2Fe-2S] cluster, but cannot transfer it to an apoferredoxin. The polypeptide is Glutaredoxin-C5, chloroplastic (Arabidopsis thaliana (Mouse-ear cress)).